The primary structure comprises 258 residues: Flap endonuclease Xni (258 aa).

Aspartate 109 serves as a coordination point for Mg(2+). One can recognise a 5'-3' exonuclease domain in the interval 165 to 254 (VKPEQLPDYW…GFNLQDIRYL (90 aa)). K(+) contacts are provided by leucine 176, alanine 177, proline 185, isoleucine 187, and isoleucine 190. Residues 189 to 194 (GIGPKA) are interaction with DNA.

Belongs to the Xni family. Mg(2+) serves as cofactor. The cofactor is K(+).

Its function is as follows. Has flap endonuclease activity. During DNA replication, flap endonucleases cleave the 5'-overhanging flap structure that is generated by displacement synthesis when DNA polymerase encounters the 5'-end of a downstream Okazaki fragment. This Photobacterium profundum (strain SS9) protein is Flap endonuclease Xni.